The chain runs to 100 residues: MGSRFLLALFLILLVLGCEVQAAQQLQQDDPGSSALLDKVQESISSYWDTAKAAAQDLYQKTYLTSVDEKLRDMYSKSSAAMTTYASIFTDQILTLLKGE.

The N-terminal stretch at 1 to 22 (MGSRFLLALFLILLVLGCEVQA) is a signal peptide. Positions 66 to 74 (SVDEKLRDM) are lipid binding. Residues 78 to 100 (SSAAMTTYASIFTDQILTLLKGE) form a lipoprotein lipase cofactor region.

The protein belongs to the apolipoprotein C2 family. In terms of processing, proapolipoprotein C-II is synthesized as a sialic acid containing glycoprotein which is subsequently desialylated prior to its proteolytic processing. Post-translationally, proapolipoprotein C-II, the major form found in plasma undergoes proteolytic cleavage of its N-terminal hexapeptide to generate the mature form apolipoprotein C-II, which occurs as the minor form in plasma.

Its subcellular location is the secreted. Its function is as follows. Component of chylomicrons, very low-density lipoproteins (VLDL), low-density lipoproteins (LDL), and high-density lipoproteins (HDL) in plasma. Plays an important role in lipoprotein metabolism as an activator of lipoprotein lipase. In Microtus ochrogaster (Prairie vole), this protein is Apolipoprotein C-II (APOC2).